We begin with the raw amino-acid sequence, 47 residues long: Protein YqhI (47 aa).

The sequence is that of Protein YqhI from Escherichia coli (strain K12).